A 341-amino-acid polypeptide reads, in one-letter code: S-adenosylmethionine:tRNA ribosyltransferase-isomerase (341 aa).

The protein belongs to the QueA family. Monomer.

The protein localises to the cytoplasm. The catalysed reaction is 7-aminomethyl-7-carbaguanosine(34) in tRNA + S-adenosyl-L-methionine = epoxyqueuosine(34) in tRNA + adenine + L-methionine + 2 H(+). Its pathway is tRNA modification; tRNA-queuosine biosynthesis. In terms of biological role, transfers and isomerizes the ribose moiety from AdoMet to the 7-aminomethyl group of 7-deazaguanine (preQ1-tRNA) to give epoxyqueuosine (oQ-tRNA). The chain is S-adenosylmethionine:tRNA ribosyltransferase-isomerase from Trichlorobacter lovleyi (strain ATCC BAA-1151 / DSM 17278 / SZ) (Geobacter lovleyi).